The sequence spans 509 residues: Bifunctional purine biosynthesis protein PurH (509 aa).

In terms of domain architecture, MGS-like spans methionine 1 to valine 144.

This sequence belongs to the PurH family.

It carries out the reaction (6R)-10-formyltetrahydrofolate + 5-amino-1-(5-phospho-beta-D-ribosyl)imidazole-4-carboxamide = 5-formamido-1-(5-phospho-D-ribosyl)imidazole-4-carboxamide + (6S)-5,6,7,8-tetrahydrofolate. The enzyme catalyses IMP + H2O = 5-formamido-1-(5-phospho-D-ribosyl)imidazole-4-carboxamide. Its pathway is purine metabolism; IMP biosynthesis via de novo pathway; 5-formamido-1-(5-phospho-D-ribosyl)imidazole-4-carboxamide from 5-amino-1-(5-phospho-D-ribosyl)imidazole-4-carboxamide (10-formyl THF route): step 1/1. It participates in purine metabolism; IMP biosynthesis via de novo pathway; IMP from 5-formamido-1-(5-phospho-D-ribosyl)imidazole-4-carboxamide: step 1/1. The polypeptide is Bifunctional purine biosynthesis protein PurH (Oenococcus oeni (strain ATCC BAA-331 / PSU-1)).